A 153-amino-acid polypeptide reads, in one-letter code: Insulin-like growth factor 1 (153 aa).

The b stretch occupies residues 49 to 77; that stretch reads GPETLCGAELVDALQFVCGDRGFYFNKPT. Intrachain disulfides connect Cys-54-Cys-96, Cys-66-Cys-109, and Cys-95-Cys-100. The c stretch occupies residues 78–89; sequence GYGSSSRRAPQT. Residues 90-110 form an a region; that stretch reads GIVDECCFRSCDLRRLEMYCA. Residues 111–118 form a d region; the sequence is PLKPAKSA. Positions 119–153 are cleaved as a propeptide — e peptide; that stretch reads RSVRAQRHTDMPKAQKEVHLKNASRGSAGNKNYRM. A disordered region spans residues 120-153; that stretch reads SVRAQRHTDMPKAQKEVHLKNASRGSAGNKNYRM. Residues 125 to 138 show a composition bias toward basic and acidic residues; sequence RHTDMPKAQKEVHL. Residues 142 to 153 show a composition bias toward polar residues; the sequence is SRGSAGNKNYRM.

The protein belongs to the insulin family. Forms a ternary complex with IGFR1 and ITGAV:ITGB3. Forms a ternary complex with IGFR1 and ITGA6:ITGB4. Forms a ternary complex with IGFBP3 and ALS.

The protein localises to the secreted. Functionally, the insulin-like growth factors, isolated from plasma, are structurally and functionally related to insulin but have a much higher growth-promoting activity. May be a physiological regulator of [1-14C]-2-deoxy-D-glucose (2DG) transport and glycogen synthesis in osteoblasts. Stimulates glucose transport in bone-derived osteoblastic (PyMS) cells and is effective at much lower concentrations than insulin, not only regarding glycogen and DNA synthesis but also with regard to enhancing glucose uptake. May play a role in synapse maturation. Ca(2+)-dependent exocytosis of IGF1 is required for sensory perception of smell in the olfactory bulb. Acts as a ligand for IGF1R. Binds to the alpha subunit of IGF1R, leading to the activation of the intrinsic tyrosine kinase activity which autophosphorylates tyrosine residues in the beta subunit thus initiating a cascade of down-stream signaling events leading to activation of the PI3K-AKT/PKB and the Ras-MAPK pathways. Binds to integrins ITGAV:ITGB3 and ITGA6:ITGB4. Its binding to integrins and subsequent ternary complex formation with integrins and IGFR1 are essential for IGF1 signaling. Induces the phosphorylation and activation of IGFR1, MAPK3/ERK1, MAPK1/ERK2 and AKT1. As part of the MAPK/ERK signaling pathway, acts as a negative regulator of apoptosis in cardiomyocytes via promotion of STUB1/CHIP-mediated ubiquitination and degradation of ICER-type isoforms of CREM. The protein is Insulin-like growth factor 1 of Rhinopithecus roxellana (Golden snub-nosed monkey).